We begin with the raw amino-acid sequence, 158 residues long: Transcription factor BTF3 homolog 4 (158 aa).

An N6-methyllysine modification is found at lysine 5. One can recognise an NAC-A/B domain in the interval 33-98 (TADDKKLQSS…AEAKPITEML (66 aa)). Residue threonine 111 is modified to Phosphothreonine. The segment at 123–158 (QVLDSKTPKPEDIDEEEDDVPDLVENFDEASKNEAN) is disordered. Over residues 134 to 150 (DIDEEEDDVPDLVENFD) the composition is skewed to acidic residues.

It belongs to the NAC-beta family.

This Bos taurus (Bovine) protein is Transcription factor BTF3 homolog 4 (BTF3L4).